Consider the following 261-residue polypeptide: Hydroxyethylthiazole kinase (261 aa).

M40 lines the substrate pocket. ATP is bound by residues K116 and T162. G189 provides a ligand contact to substrate.

The protein belongs to the Thz kinase family. The cofactor is Mg(2+).

It carries out the reaction 5-(2-hydroxyethyl)-4-methylthiazole + ATP = 4-methyl-5-(2-phosphooxyethyl)-thiazole + ADP + H(+). It participates in cofactor biosynthesis; thiamine diphosphate biosynthesis; 4-methyl-5-(2-phosphoethyl)-thiazole from 5-(2-hydroxyethyl)-4-methylthiazole: step 1/1. In terms of biological role, catalyzes the phosphorylation of the hydroxyl group of 4-methyl-5-beta-hydroxyethylthiazole (THZ). In Methanosarcina mazei (strain ATCC BAA-159 / DSM 3647 / Goe1 / Go1 / JCM 11833 / OCM 88) (Methanosarcina frisia), this protein is Hydroxyethylthiazole kinase.